Here is a 1298-residue protein sequence, read N- to C-terminus: Phosphoribosylformylglycinamidine synthase (1298 aa).

Residues 298-328 (TAIAPFPGASTGSGGEIRDEGATGRGAKPKA) form a disordered region. ATP is bound by residues 305–316 (GASTGSGGEIRD), 384–386 (TGY), and Ala-676. Residues Asp-677, Glu-716, Asn-720, and Asp-884 each coordinate Mg(2+). Ser-886 contributes to the ATP binding site. The 254-residue stretch at 1045–1298 (VAILREQGVN…MFRNARVWVD (254 aa)) folds into the Glutamine amidotransferase type-1 domain. The active-site Nucleophile is Cys-1138. Residues His-1263 and Glu-1265 contribute to the active site.

It in the N-terminal section; belongs to the FGAMS family. Monomer.

The protein localises to the cytoplasm. The enzyme catalyses N(2)-formyl-N(1)-(5-phospho-beta-D-ribosyl)glycinamide + L-glutamine + ATP + H2O = 2-formamido-N(1)-(5-O-phospho-beta-D-ribosyl)acetamidine + L-glutamate + ADP + phosphate + H(+). Its pathway is purine metabolism; IMP biosynthesis via de novo pathway; 5-amino-1-(5-phospho-D-ribosyl)imidazole from N(2)-formyl-N(1)-(5-phospho-D-ribosyl)glycinamide: step 1/2. Functionally, phosphoribosylformylglycinamidine synthase involved in the purines biosynthetic pathway. Catalyzes the ATP-dependent conversion of formylglycinamide ribonucleotide (FGAR) and glutamine to yield formylglycinamidine ribonucleotide (FGAM) and glutamate. The polypeptide is Phosphoribosylformylglycinamidine synthase (Pseudomonas aeruginosa (strain ATCC 15692 / DSM 22644 / CIP 104116 / JCM 14847 / LMG 12228 / 1C / PRS 101 / PAO1)).